A 1523-amino-acid polypeptide reads, in one-letter code: ATP-binding cassette sub-family C member 3 (1523 aa).

Topologically, residues 1–35 (MDRLCGSGELGSKFWDSNLSIYTNTPDLTPCFQNS) are extracellular. An N-linked (GlcNAc...) asparagine glycan is attached at N18. The helical transmembrane segment at 36–56 (LLAWVPCIYLWAALPCYLFYL) threads the bilayer. The Cytoplasmic segment spans residues 57-75 (RHHQLGYIVLSWLSRLKTA). A helical transmembrane segment spans residues 76–96 (LGVLLWCVSWVDLFYSFHGLI). Residues 97–102 (HGSSPA) are Extracellular-facing. A helical membrane pass occupies residues 103 to 123 (PVFFVTPLVVGITMLLATLLI). Topologically, residues 124–129 (QYERLR) are cytoplasmic. The chain crosses the membrane as a helical span at residues 130–150 (GVQSSGVLIIFWLLCVICAII). The Extracellular segment spans residues 151 to 170 (PFRSKILSALAEGKILDPFR). Residues 171–191 (FTTFYIYFALVFCALILSCFK) traverse the membrane as a helical segment. Over 192-301 (EKPPLFSPEN…KSKQPSFLRA (110 aa)) the chain is Cytoplasmic. Residues 302-324 (LVRTFTSSLLMSACFNLIQNLLG) form a helical membrane-spanning segment. One can recognise an ABC transmembrane type-1 1 domain in the interval 310–593 (LLMSACFNLI…LPQLISGLTQ (284 aa)). At 325–345 (FVNPQLLSILIRFISDPTAPT) the chain is on the extracellular side. The chain crosses the membrane as a helical span at residues 346–366 (WWGFLLAGLMFLSSTMQTLIL). Over 367–419 (HQYYHCIFVMALRLRTAIIGVIYRKALVITNSVKRESTVGEMVNLMSVDAQRF) the chain is Cytoplasmic. A helical membrane pass occupies residues 420 to 440 (MDVSPFINLLWSAPLQVILAI). A topological domain (extracellular) is located at residue Y441. Residues 442 to 462 (FLWQILGPSALAGVAVIVLLI) form a helical membrane-spanning segment. The Cytoplasmic segment spans residues 463 to 535 (PLNGAVSMKM…KGAYLQAIST (73 aa)). Residues 536–556 (FIWICTPFLVTLITLGVYVYV) form a helical membrane-spanning segment. At 557–567 (DESNVLDAEKA) the chain is on the extracellular side. The chain crosses the membrane as a helical span at residues 568–588 (FVSLSLFNILKIPLNMLPQLI). Over 589 to 967 (SGLTQASVSL…YAKSMGLCTT (379 aa)) the chain is Cytoplasmic. The 225-residue stretch at 626–850 (ITIHNGTFTW…DGSFANFLRN (225 aa)) folds into the ABC transporter 1 domain. 660 to 667 (GPVGCGKS) provides a ligand contact to ATP. Phosphoserine is present on residues S903 and S906. The segment covering 903–915 (SSLSSEGEVQNRT) has biased composition (polar residues). Residues 903–923 (SSLSSEGEVQNRTMPKKHTNS) are disordered. The ABC transmembrane type-1 2 domain occupies 967–1248 (TLSICLLYGG…MIRMISDLES (282 aa)). A helical membrane pass occupies residues 968–988 (LSICLLYGGQSAAAIGANVWL). Topologically, residues 989 to 1013 (SAWSNDAEEHGQQNKTSVRLGVYAA) are extracellular. An N-linked (GlcNAc...) asparagine glycan is attached at N1002. A helical transmembrane segment spans residues 1014–1034 (LGILQGLLVMLSAFTMVVGAI). Residues 1035 to 1071 (QAARLLHEALLHNKIRSPQSFFDTTPSGRILNRFSKD) lie on the Cytoplasmic side of the membrane. The chain crosses the membrane as a helical span at residues 1072–1092 (IYVIDEVLAPTILMLLNSFFT). Topologically, residues 1093–1096 (SIST) are extracellular. Residues 1097-1117 (IMVIVASTPLFMVVVLPLAVL) form a helical membrane-spanning segment. The Cytoplasmic portion of the chain corresponds to 1118–1191 (YGFVQRFYVA…YPYIASNRWL (74 aa)). The chain crosses the membrane as a helical span at residues 1192–1212 (GVHVEFVGNCVVLFAALFAVI). Residues 1213–1219 (GRNSLNP) are Extracellular-facing. A helical transmembrane segment spans residues 1220-1240 (GLVGLSVSYALQVTMALNWMI). The Cytoplasmic segment spans residues 1241–1523 (RMISDLESNI…YGMAKDAGLA (283 aa)). The ABC transporter 2 domain maps to 1287 to 1519 (FRNYSVRYRP…GGIFYGMAKD (233 aa)). 1319 to 1326 (GRTGAGKS) provides a ligand contact to ATP.

It belongs to the ABC transporter superfamily. ABCC family. Conjugate transporter (TC 3.A.1.208) subfamily. In terms of tissue distribution, detected throughout the gastrointestinal tract, liver, lung, pancreas, bladder, gall bladder and at low levels in the adrenal gland.

It localises to the basolateral cell membrane. It is found in the basal cell membrane. The enzyme catalyses an S-substituted glutathione(in) + ATP + H2O = an S-substituted glutathione(out) + ADP + phosphate + H(+). It carries out the reaction ATP + H2O + xenobioticSide 1 = ADP + phosphate + xenobioticSide 2.. The catalysed reaction is 17beta-estradiol 17-O-(beta-D-glucuronate)(in) + ATP + H2O = 17beta-estradiol 17-O-(beta-D-glucuronate)(out) + ADP + phosphate + H(+). It catalyses the reaction dehydroepiandrosterone 3-sulfate(in) + ATP + H2O = dehydroepiandrosterone 3-sulfate(out) + ADP + phosphate + H(+). The enzyme catalyses leukotriene C4(in) + ATP + H2O = leukotriene C4(out) + ADP + phosphate + H(+). It carries out the reaction taurocholate(in) + ATP + H2O = taurocholate(out) + ADP + phosphate + H(+). The catalysed reaction is glycocholate(in) + ATP + H2O = glycocholate(out) + ADP + phosphate + H(+). It catalyses the reaction taurolithocholate 3-sulfate(in) + ATP + H2O = taurolithocholate 3-sulfate(out) + ADP + phosphate + H(+). The enzyme catalyses taurochenodeoxycholate 3-sulfate(in) + ATP + H2O = taurochenodeoxycholate 3-sulfate(out) + ADP + phosphate + H(+). It carries out the reaction (4Z,15Z)-bilirubin IXalpha C8-beta-D-glucuronoside(in) + ATP + H2O = (4Z,15Z)-bilirubin IXalpha C8-beta-D-glucuronoside(out) + ADP + phosphate + H(+). The catalysed reaction is (4Z,15Z)-bilirubin IXalpha C8,C12-beta-D-bisglucuronoside(in) + ATP + H2O = (4Z,15Z)-bilirubin IXalpha C8,C12-beta-D-bisglucuronoside(out) + ADP + phosphate + H(+). In terms of biological role, ATP-dependent transporter of the ATP-binding cassette (ABC) family that binds and hydrolyzes ATP to enable active transport of various substrates including many drugs, toxicants and endogenous compound across cell membranes. Transports glucuronide conjugates such as bilirubin diglucuronide, estradiol-17-beta-o-glucuronide and GSH conjugates such as leukotriene C4 (LTC4). Transports also various bile salts (taurocholate, glycocholate, taurochenodeoxycholate-3-sulfate, taurolithocholate- 3-sulfate). Does not contribute substantially to bile salt physiology but provides an alternative route for the export of bile acids and glucuronides from cholestatic hepatocytes. May contribute to regulate the transport of organic compounds in testes across the blood-testis-barrier. The protein is ATP-binding cassette sub-family C member 3 (Abcc3) of Mus musculus (Mouse).